Consider the following 75-residue polypeptide: UPF0352 protein VV1_3121 (75 aa).

The protein belongs to the UPF0352 family.

The polypeptide is UPF0352 protein VV1_3121 (Vibrio vulnificus (strain CMCP6)).